We begin with the raw amino-acid sequence, 984 residues long: Protein translocase subunit SecA (984 aa).

Residues glutamine 96, 114 to 118 (GEGKT), and aspartate 595 each bind ATP. 2 stretches are compositionally biased toward basic and acidic residues: residues 930–942 (EHEEEKKHQRLLE) and 952–971 (KSDKKPRPKTLKERLKEERL). The segment at 930-984 (EHEEEKKHQRLLEEAELQGVQGKSDKKPRPKTLKERLKEERLRKRKLKAKKKEQE) is disordered. Residues 972–984 (RKRKLKAKKKEQE) are compositionally biased toward basic residues.

It belongs to the SecA family. Monomer and homodimer. Part of the essential Sec protein translocation apparatus which comprises SecA, SecYEG and auxiliary proteins SecDF. Other proteins may also be involved.

It localises to the cell inner membrane. The protein localises to the cytoplasm. The enzyme catalyses ATP + H2O + cellular proteinSide 1 = ADP + phosphate + cellular proteinSide 2.. In terms of biological role, part of the Sec protein translocase complex. Interacts with the SecYEG preprotein conducting channel. Has a central role in coupling the hydrolysis of ATP to the transfer of proteins into and across the cell membrane, serving as an ATP-driven molecular motor driving the stepwise translocation of polypeptide chains across the membrane. The chain is Protein translocase subunit SecA from Aquifex aeolicus (strain VF5).